Reading from the N-terminus, the 309-residue chain is Taste receptor type 2 member 46 (309 aa).

Position 1 (Met1) is a topological domain, extracellular. A helical transmembrane segment spans residues Ile2–Phe22. The Cytoplasmic segment spans residues Ala23–Gln46. The helical transmembrane segment at Ile47–Tyr67 threads the bilayer. At Ala68–Asn86 the chain is on the extracellular side. The helical transmembrane segment at Val87–Leu107 threads the bilayer. Residues Leu108–Lys126 lie on the Cytoplasmic side of the membrane. A helical transmembrane segment spans residues Ser127–Ile147. At Asn148–Thr178 the chain is on the extracellular side. 2 N-linked (GlcNAc...) asparagine glycosylation sites follow: Asn161 and Asn176. Residues Val179–Ile199 form a helical membrane-spanning segment. Residues Cys200–Gln229 are Cytoplasmic-facing. A helical membrane pass occupies residues Thr230–Trp250. Topologically, residues Ser251–Pro259 are extracellular. Residues Val260–Ile280 form a helical membrane-spanning segment. At Trp281 to Ser309 the chain is on the cytoplasmic side.

It belongs to the G-protein coupled receptor T2R family. As to expression, expressed in subsets of taste receptor cells of the tongue and exclusively in gustducin-positive cells. Expressed on ciliated airway epithelium.

The protein resides in the membrane. It localises to the cell projection. The protein localises to the cilium membrane. Receptor that may play a role in the perception of bitterness and is gustducin-linked. May play a role in sensing the chemical composition of the gastrointestinal content. The activity of this receptor may stimulate alpha gustducin, mediate PLC-beta-2 activation and lead to the gating of TRPM5. In airway epithelial cells, binding of bitter compounds increases the intracellular calcium ion concentration and stimulates ciliary beat frequency. In Homo sapiens (Human), this protein is Taste receptor type 2 member 46 (TAS2R46).